Here is an 84-residue protein sequence, read N- to C-terminus: Beta-toxin Ct16 (84 aa).

The first 19 residues, 1 to 19 (MNYFILLFVATFLLLDVNC), serve as a signal peptide directing secretion. Residues 21 to 80 (KDGYPVDANNCKFECWKNEYCDELCKAKRAESGYCYKLKLSCWCEGLPDDEPTKTSDRCY) enclose the LCN-type CS-alpha/beta domain. 4 cysteine pairs are disulfide-bonded: Cys-31/Cys-79, Cys-35/Cys-55, Cys-41/Cys-62, and Cys-45/Cys-64. A Threonine amide modification is found at Thr-82.

This sequence belongs to the long (4 C-C) scorpion toxin superfamily. Sodium channel inhibitor family. Alpha subfamily. Expressed by the venom gland.

The protein localises to the secreted. Alpha toxins bind voltage-independently at site-3 of sodium channels (Nav) and inhibit the inactivation of the activated channels, thereby blocking neuronal transmission. Is possibly toxic to mice. The polypeptide is Beta-toxin Ct16 (Centruroides tecomanus (Scorpion)).